A 347-amino-acid polypeptide reads, in one-letter code: MNPAIFTTIILTMILGTMIVTTSSHWLTVWIGFEMNMLAIIPILMKKYNPRSMEASTKYFLTQATASMLLMLAITINLVYSGQWSVTKPLTPMASITMTLAMAMKLGLSPFHFWVPEVTQGTQLSSGLILLTWQKLAPMSILYQISPTINLELLLMMAILSIAIGGWGGLNQTQLRKIMAYSSIAHMGWMTAIMAYNPAMTLLNLXVYILLTTTXFMMLMLNSSTTTLSLSHTWNKTPLLATTILLIMLSLGGLPPLSGFXPKWMIIQEMTKNDSIIMPTIMAMAALLNLYFYMRLTYSTSLTMFPSTNNMKMKWQFNSTKPMTYISPLIILSTLXLPLSPMLTLLE.

11 helical membrane-spanning segments follow: residues 1–21 (MNPA…MIVT), 25–45 (HWLT…PILM), 59–79 (YFLT…INLV), 96–116 (ITMT…FWVP), 127–147 (GLIL…QISP), 149–169 (INLE…GWGG), 178–198 (IMAY…AYNP), 201–221 (TLLN…MLML), 240–260 (LATT…LSGF), 274–294 (DSII…YFYM), and 326–346 (ISPL…LTLL).

It belongs to the complex I subunit 2 family. Core subunit of respiratory chain NADH dehydrogenase (Complex I) which is composed of 45 different subunits. Interacts with TMEM242.

Its subcellular location is the mitochondrion inner membrane. It carries out the reaction a ubiquinone + NADH + 5 H(+)(in) = a ubiquinol + NAD(+) + 4 H(+)(out). Its function is as follows. Core subunit of the mitochondrial membrane respiratory chain NADH dehydrogenase (Complex I) which catalyzes electron transfer from NADH through the respiratory chain, using ubiquinone as an electron acceptor. Essential for the catalytic activity and assembly of complex I. This is NADH-ubiquinone oxidoreductase chain 2 from Dobsonia minor (Lesser bare-backed fruit bat).